The sequence spans 102 residues: Co-chaperonin GroES (102 aa).

This sequence belongs to the GroES chaperonin family. Heptamer of 7 subunits arranged in a ring. Interacts with the chaperonin GroEL.

The protein localises to the cytoplasm. Its function is as follows. Together with the chaperonin GroEL, plays an essential role in assisting protein folding. The GroEL-GroES system forms a nano-cage that allows encapsulation of the non-native substrate proteins and provides a physical environment optimized to promote and accelerate protein folding. GroES binds to the apical surface of the GroEL ring, thereby capping the opening of the GroEL channel. The protein is Co-chaperonin GroES of Chlamydia pneumoniae (Chlamydophila pneumoniae).